The following is a 421-amino-acid chain: uncharacterized protein (421 aa).

Positions 14 to 72 constitute a TRAM domain; it reads DLTKGDTITVEVTRPAHGGEGIAHHGGRVIFVRGGFPGDDVDVEITQVKKRFARGFVVQ. 4 residues coordinate S-adenosyl-L-methionine: glutamine 250, tyrosine 286, glutamate 308, and aspartate 349. Cysteine 376 serves as the catalytic Nucleophile.

It belongs to the class I-like SAM-binding methyltransferase superfamily. RNA M5U methyltransferase family.

This is an uncharacterized protein from Corynebacterium efficiens (strain DSM 44549 / YS-314 / AJ 12310 / JCM 11189 / NBRC 100395).